Consider the following 462-residue polypeptide: Metal cation symporter ZIP8 (462 aa).

A signal peptide spans 1–19 (MAPGRAVAGLLLLAATGLG). The Extracellular portion of the chain corresponds to 20–132 (RPSEGPELAF…PSFSEVWGYG (113 aa)). N-linked (GlcNAc...) asparagine glycosylation is found at N40, N88, and N96. A helical membrane pass occupies residues 133–153 (FLSVTIINLASLLGLILTPLI). Over 154–160 (KKSYFPK) the chain is Cytoplasmic. Residues 161-181 (ILTYFVGLAIGTLFSNAIFQL) traverse the membrane as a helical segment. Residues 182 to 191 (IPEAFGFNPK) lie on the Extracellular side of the membrane. A helical membrane pass occupies residues 192–212 (IDNYVEKAVAVFGGFYMLFFV). The Cytoplasmic segment spans residues 213-367 (ERTLKMLLKT…LNAGMSTRQA (155 aa)). The XEXPHE-motif signature appears at 345–350 (EEFPHE). The chain crosses the membrane as a helical span at residues 368-388 (LLFNFLSACSCYVGLAFGILV). Over 389 to 390 (GN) the chain is Extracellular. Residues 391–411 (NFAPNIIFALAGGMFLYISLA) form a helical membrane-spanning segment. At 412 to 431 (DMFPEMNDMLREKVTGRQTD) the chain is on the cytoplasmic side. Residues 432–452 (FTFFMIQNAGMLTGFTAILLI) traverse the membrane as a helical segment. The Extracellular portion of the chain corresponds to 453–462 (TLYAGDIELQ).

The protein belongs to the ZIP transporter (TC 2.A.5) family. As to quaternary structure, homodimer. Post-translationally, N-glycosylated. N-glycosylation is not required for proper iron and zinc transport.

The protein localises to the cell membrane. The protein resides in the lysosome membrane. It is found in the apical cell membrane. Its subcellular location is the basolateral cell membrane. It carries out the reaction Zn(2+)(out) + 2 hydrogencarbonate(out) = Zn(2+)(in) + 2 hydrogencarbonate(in). It catalyses the reaction selenite(out) + Zn(2+)(out) + hydrogencarbonate(out) = selenite(in) + Zn(2+)(in) + hydrogencarbonate(in). The enzyme catalyses Mn(2+)(out) + 2 hydrogencarbonate(out) = Mn(2+)(in) + 2 hydrogencarbonate(in). The catalysed reaction is Fe(2+)(out) + 2 hydrogencarbonate(out) = Fe(2+)(in) + 2 hydrogencarbonate(in). It carries out the reaction Cd(2+)(out) + 2 hydrogencarbonate(out) = Cd(2+)(in) + 2 hydrogencarbonate(in). It catalyses the reaction Co(2+)(out) + 2 hydrogencarbonate(out) = Co(2+)(in) + 2 hydrogencarbonate(in). Its function is as follows. Electroneutral divalent metal cation:bicarbonate symporter of the plasma membrane mediating the cellular uptake of zinc and manganese, two divalent metal cations important for development, tissue homeostasis and immunity. Transports an electroneutral complex composed of a divalent metal cation and two bicarbonate anions or alternatively a bicarbonate and a selenite anion. Thereby, it also contributes to the cellular uptake of selenium, an essential trace metal and micronutrient. Also imports cadmium a non-essential metal which is cytotoxic and carcinogenic. May also transport iron and cobalt through membranes. Through zinc import, indirectly regulates the metal-dependent transcription factor MTF1 and the expression of some metalloproteases involved in cartilage catabolism and also probably heart development. Also indirectly regulates the expression of proteins involved in cell morphology and cytoskeleton organization. Indirectly controls innate immune function and inflammatory response by regulating zinc cellular uptake which in turn modulates the expression of genes specific of these processes. Protects, for instance, cells from injury and death at the onset of inflammation. By regulating zinc influx into monocytes also directly modulates their adhesion to endothelial cells and arteries. Reclaims manganese from the bile at the apical membrane of hepatocytes, thereby regulating the activity of the manganese-dependent enzymes through the systemic levels of the nutrient. Also participates in manganese reabsorption in the proximal tubule of the kidney. By mediating the extracellular uptake of manganese by cells of the blood-brain barrier, may also play a role in the transport of the micronutrient to the brain. With manganese cellular uptake also participates in mitochondrial proper function. Finally, also probably functions intracellularly, translocating zinc from lysosome to cytosol to indirectly enhance the expression of specific genes during TCR-mediated T cell activation. The sequence is that of Metal cation symporter ZIP8 from Rattus norvegicus (Rat).